The primary structure comprises 344 residues: Type II methyltransferase M.FnuDI (344 aa).

An SAM-dependent MTase C5-type domain is found at 1 to 330; sequence MKLLSLFSGA…KRIKETLTDK (330 aa). Residue Cys-71 is part of the active site.

This sequence belongs to the class I-like SAM-binding methyltransferase superfamily. C5-methyltransferase family.

The catalysed reaction is a 2'-deoxycytidine in DNA + S-adenosyl-L-methionine = a 5-methyl-2'-deoxycytidine in DNA + S-adenosyl-L-homocysteine + H(+). Functionally, a methylase, recognizes the double-stranded sequence 5'-GGCC-3', methylates C-? on both strands, and protects the DNA from cleavage by the FnuDI endonuclease. This chain is Type II methyltransferase M.FnuDI (fnuDIM), found in Fusobacterium nucleatum.